Consider the following 132-residue polypeptide: Small ribosomal subunit protein uS8 (132 aa).

The protein belongs to the universal ribosomal protein uS8 family. In terms of assembly, part of the 30S ribosomal subunit. Contacts proteins S5 and S12.

One of the primary rRNA binding proteins, it binds directly to 16S rRNA central domain where it helps coordinate assembly of the platform of the 30S subunit. The polypeptide is Small ribosomal subunit protein uS8 (Latilactobacillus sakei subsp. sakei (strain 23K) (Lactobacillus sakei subsp. sakei)).